Reading from the N-terminus, the 333-residue chain is Fructose-1,6-bisphosphatase class 1 1 (333 aa).

Mg(2+) is bound by residues Glu81, Asp100, Leu102, and Asp103. Residues 103-106 (DGSS) and Asn191 each bind substrate. Glu263 is a binding site for Mg(2+).

Belongs to the FBPase class 1 family. As to quaternary structure, homotetramer. Mg(2+) serves as cofactor.

It localises to the cytoplasm. The catalysed reaction is beta-D-fructose 1,6-bisphosphate + H2O = beta-D-fructose 6-phosphate + phosphate. It functions in the pathway carbohydrate biosynthesis; gluconeogenesis. Its activity is regulated as follows. Fructose-1,6-bisphosphatase II is not light-activated. In Cereibacter sphaeroides (Rhodobacter sphaeroides), this protein is Fructose-1,6-bisphosphatase class 1 1.